The sequence spans 343 residues: MQLLCWWQILLWVLGLPARGLEEDSGHTWQEERPVPALQVGSVYLNEEEAAQGHRVQARVAEPSEASLGPRGDPMVVLSVIPGAAEDQRSTEAHDGTCSAQGDEDPRCGGRENLFGLQGAGGFQDREEEYYAEPGVAEAEPVATEDANSTDSLKSPKVNCEERNVTGLENFTLKILNMSQDLMDFLNPNGSDCTLVLFYTPWCRFSASLAPHFNSLPRAFPTLGFLALDASQHSSLSTRFGTVAVPNILLFQGAKPMARFNHTDRTLETLKIFIFNQTGIEAKKNVVVTQADQLGPLPSTLVKTVDWLLVFSLFFLISFIMYATIRTESIRWLIPGQEQEHAE.

The first 20 residues, 1–20, serve as a signal peptide directing secretion; it reads MQLLCWWQILLWVLGLPARG. At 21-304 the chain is on the extracellular side; the sequence is LEEDSGHTWQ…GPLPSTLVKT (284 aa). Over residues 86–95 the composition is skewed to basic and acidic residues; it reads EDQRSTEAHD. The segment at 86 to 112 is disordered; the sequence is EDQRSTEAHDGTCSAQGDEDPRCGGRE. Positions 162–279 constitute a Thioredoxin domain; sequence ERNVTGLENF…LKIFIFNQTG (118 aa). Residues N170, N177, N189, and N276 are each glycosylated (N-linked (GlcNAc...) asparagine). A helical membrane pass occupies residues 305 to 325; sequence VDWLLVFSLFFLISFIMYATI. Topologically, residues 326–343 are cytoplasmic; the sequence is RTESIRWLIPGQEQEHAE.

The protein resides in the cell projection. It is found in the cilium membrane. Acts as a positive regulator of ciliary hedgehog signaling. Required for cilia biogenesis. The protein is Thioredoxin domain-containing protein 15 (Txndc15) of Rattus norvegicus (Rat).